A 311-amino-acid chain; its full sequence is Urease accessory protein UreD (311 aa).

This sequence belongs to the UreD family. UreD, UreF and UreG form a complex that acts as a GTP-hydrolysis-dependent molecular chaperone, activating the urease apoprotein by helping to assemble the nickel containing metallocenter of UreC. The UreE protein probably delivers the nickel.

The protein resides in the cytoplasm. Functionally, required for maturation of urease via the functional incorporation of the urease nickel metallocenter. This chain is Urease accessory protein UreD, found in Parasynechococcus marenigrum (strain WH8102).